The chain runs to 281 residues: MIKLGFHVSIAGSLPLAVSRAQEAGCDTFQIFTRSPRVWAAKPIEPSIAEAFIDALNISGIGPVVDHMPYLPNPAAEKPEIYARSIFTMTEELDRCDQLKIPYLVTHLGHHGKEDGHKKGQEKVIAAIGQALDESEGETMILLENTANEKNTVGGTFTDIGVISDALSNERRVGFCFDTCHAAAAGYDLKGHGAETVFGWFNDEAGSLDRLKVIHLNDMKGGVGSHLDRHEHLGLGYLGEETIHDVLTFPKISHCAFIMETPSDEIRTDKDNLAVARRLAV.

Residues His67, His107, Glu144, Asp178, His181, His215, Asp228, His230, and Glu260 each coordinate Zn(2+).

The protein belongs to the AP endonuclease 2 family. It depends on Zn(2+) as a cofactor.

The catalysed reaction is Endonucleolytic cleavage to 5'-phosphooligonucleotide end-products.. Functionally, endonuclease IV plays a role in DNA repair. It cleaves phosphodiester bonds at apurinic or apyrimidinic (AP) sites, generating a 3'-hydroxyl group and a 5'-terminal sugar phosphate. This chain is Probable endonuclease 4, found in Methanocorpusculum labreanum (strain ATCC 43576 / DSM 4855 / Z).